Here is a 139-residue protein sequence, read N- to C-terminus: Large-conductance mechanosensitive channel (139 aa).

2 helical membrane passes run 9-29 (AFAVKGNVVDMAVGIIIGAAF) and 79-99 (IQTVIDFVIVAFAIFMGVKAI).

This sequence belongs to the MscL family. In terms of assembly, homopentamer.

The protein resides in the cell inner membrane. In terms of biological role, channel that opens in response to stretch forces in the membrane lipid bilayer. May participate in the regulation of osmotic pressure changes within the cell. This is Large-conductance mechanosensitive channel from Pseudomonas putida (strain ATCC 47054 / DSM 6125 / CFBP 8728 / NCIMB 11950 / KT2440).